Reading from the N-terminus, the 153-residue chain is Superoxide dismutase [Cu-Zn] (153 aa).

Cu cation contacts are provided by His-45, His-47, and His-62. An intrachain disulfide couples Cys-56 to Cys-145. Residues His-62, His-70, His-79, and Asp-82 each coordinate Zn(2+). Cu cation is bound at residue His-119.

The protein belongs to the Cu-Zn superoxide dismutase family. Homodimer. Cu cation serves as cofactor. Requires Zn(2+) as cofactor.

It localises to the cytoplasm. It catalyses the reaction 2 superoxide + 2 H(+) = H2O2 + O2. In terms of biological role, destroys radicals which are normally produced within the cells and which are toxic to biological systems. The protein is Superoxide dismutase [Cu-Zn] of Drosophila yakuba (Fruit fly).